The primary structure comprises 321 residues: DNA packaging protein (321 aa).

Positions 1 to 196 (MLSYDRILNF…DERRKTKFGQ (196 aa)) are ATPase. 13 to 20 (GARGIGKS) lines the ATP pocket. The interval 222–321 (KRSKNSKFVF…YEMFKKMRVQ (100 aa)) is DNA-binding.

This sequence belongs to the phi29likevirus gp16 family. As to quaternary structure, homopentamer. Interacts with the packaging RNA (pRNA). Part of a DNA-gp3-gp16 complex.

It catalyses the reaction ATP + H2O = ADP + phosphate + H(+). Functionally, ATPase required for the genome encapsidation reaction. Part of the active packaging motor via the binding to the packaging RNA (pRNA), itself fixed to the head-tail connector at the unique portal vertex of the prohead. Binds and supercoils the pre-formed, unit-length DNA bound to gp3 to produce an initiation complex for DNA packaging. Provides the energy to actively pump the viral DNA into the prohead. Approximately one molecule of ATP is used in the packaging of 2 bp of viral DNA. ATP hydrolysis results in a conformational change that causes the arginine/lysine finger of one subunit to move into the active site of its neighbor, where it interacts with the negatively charged oxygens on the gamma-phosphate of ATP. After packaging, the ATPase and the pRNA are released from the prohead. In Bacillus subtilis (Bacteriophage B103), this protein is DNA packaging protein (16).